The following is a 209-amino-acid chain: Holliday junction branch migration complex subunit RuvA (209 aa).

Residues 1–70 are domain I; sequence MINYLKGKTT…EDQQILYGFS (70 aa). The segment at 71–149 is domain II; it reads TDSERDLFRQ…QWEQAIALKT (79 aa). The flexible linker stretch occupies residues 150 to 160; the sequence is PVSVGVPSREI. Positions 160–209 are domain III; the sequence is ILEEVEMTLLALGYTDEEIDQAISAISQDNLLLKNPHVEEWLKSAIAWLS.

Belongs to the RuvA family. In terms of assembly, homotetramer. Forms an RuvA(8)-RuvB(12)-Holliday junction (HJ) complex. HJ DNA is sandwiched between 2 RuvA tetramers; dsDNA enters through RuvA and exits via RuvB. An RuvB hexamer assembles on each DNA strand where it exits the tetramer. Each RuvB hexamer is contacted by two RuvA subunits (via domain III) on 2 adjacent RuvB subunits; this complex drives branch migration. In the full resolvosome a probable DNA-RuvA(4)-RuvB(12)-RuvC(2) complex forms which resolves the HJ.

It is found in the cytoplasm. The RuvA-RuvB-RuvC complex processes Holliday junction (HJ) DNA during genetic recombination and DNA repair, while the RuvA-RuvB complex plays an important role in the rescue of blocked DNA replication forks via replication fork reversal (RFR). RuvA specifically binds to HJ cruciform DNA, conferring on it an open structure. The RuvB hexamer acts as an ATP-dependent pump, pulling dsDNA into and through the RuvAB complex. HJ branch migration allows RuvC to scan DNA until it finds its consensus sequence, where it cleaves and resolves the cruciform DNA. The sequence is that of Holliday junction branch migration complex subunit RuvA from Gloeothece citriformis (strain PCC 7424) (Cyanothece sp. (strain PCC 7424)).